Consider the following 362-residue polypeptide: Type-1 angiotensin II receptor A (362 aa).

Residues 1 to 26 are Extracellular-facing; the sequence is MSNASTVETSDVERIAVNCSKSGMHN. Asn-3 and Asn-18 each carry an N-linked (GlcNAc...) asparagine glycan. 2 cysteine pairs are disulfide-bonded: Cys-19-Cys-273 and Cys-102-Cys-181. The chain crosses the membrane as a helical span at residues 27-56; the sequence is YIFIAIPIIYSTIFVVGVFGNSMVVIVIYS. Over 57–62 the chain is Cytoplasmic; sequence YMKMKT. A helical membrane pass occupies residues 63 to 90; that stretch reads VASIFLMNLALSDLCFVITLPLWAAYTA. Residues 91-99 lie on the Extracellular side of the membrane; it reads MHYHWPFGN. Residues 100–126 form a helical membrane-spanning segment; that stretch reads FLCKVASTAITLNLYTTVFLLTCLSID. Residues 127–142 lie on the Cytoplasmic side of the membrane; that stretch reads RYSAIVHPMKSRIWRT. A helical transmembrane segment spans residues 143–166; sequence AMVARLTCVGIWLVAFLASMPSII. Topologically, residues 167-191 are extracellular; sequence YRQIYLFHDTNQTVCAIVYDSGHIY. Arg-168 contacts angiotensin II. N-linked (GlcNAc...) asparagine glycosylation occurs at Asn-177. 2 residues coordinate angiotensin II: Tyr-185 and Lys-200. Residues 192–217 form a helical membrane-spanning segment; that stretch reads FMVGMSLAKNIVGFLIPFLIILTSYT. Over 218-238 the chain is Cytoplasmic; it reads LIGKTLKEVYRAQRARNDDIF. Residues 239–267 form a helical membrane-spanning segment; it reads KMIVAVVLLFFFCWIPYQVFTFLDVLIQM. Residues 268–277 lie on the Extracellular side of the membrane; it reads DVIQNCKMYD. The helical transmembrane segment at 278-303 threads the bilayer; the sequence is IVDTGMPITICIAYFNSCLNPFLYGF. Residues 304-362 are Cytoplasmic-facing; it reads FGKNFRKHFLQLIKYIPPKMRTHASVNTKSSLVSSSLSDTKRASKKIALQMTDNEEHCK. A lipid anchor (S-palmitoyl cysteine) is attached at Cys-361.

This sequence belongs to the G-protein coupled receptor 1 family. In terms of processing, C-terminal Ser or Thr residues may be phosphorylated. Expressed in lung, liver, kidney, and spleen, with highest expression in the heart.

It is found in the cell membrane. Functionally, receptor for angiotensin II, a vasoconstricting peptide, which acts as a key regulator of blood pressure and sodium retention by the kidney. The activated receptor in turn couples to G-alpha proteins G(q) (GNAQ, GNA11, GNA14 or GNA15) and thus activates phospholipase C and increases the cytosolic Ca(2+) concentrations, which in turn triggers cellular responses such as stimulation of protein kinase C. This Xenopus laevis (African clawed frog) protein is Type-1 angiotensin II receptor A (agtr1-a).